The following is a 237-amino-acid chain: N-alpha-acetyltransferase 40 (237 aa).

G2 is lipidated: N-myristoyl glycine. In terms of domain architecture, N-acetyltransferase spans 63–216 (SGLEPATVDW…EDCSYEILSR (154 aa)). Residues Y85, 127–129 (DVE), and Y138 contribute to the substrate site. Residues 140–142 (VQL) and 148–153 (RKGLGK) contribute to the acetyl-CoA site. A substrate-binding site is contributed by T174. Acetyl-CoA is bound at residue N179. Substrate is bound by residues S197 and Y211.

This sequence belongs to the acetyltransferase family. NAA40 subfamily.

It localises to the cytoplasm. The protein localises to the nucleus. It carries out the reaction N-terminal L-seryl-[histone H4] + acetyl-CoA = N-terminal N(alpha)-acetyl-L-seryl-[histone H4] + CoA + H(+). It catalyses the reaction N-terminal L-seryl-[histone H2A] + acetyl-CoA = N-terminal N(alpha)-acetyl-L-seryl-[histone H2A] + CoA + H(+). N-alpha-acetyltransferase that specifically mediates the acetylation of the N-terminal residues of histones H4 and H2A. In contrast to other N-alpha-acetyltransferase, has a very specific selectivity for histones H4 and H2A N-terminus and specifically recognizes the 'Ser-Gly-Arg-Gly sequence'. Acts as a negative regulator of apoptosis. May play a role in hepatic lipid metabolism. The protein is N-alpha-acetyltransferase 40 of Mus musculus (Mouse).